The primary structure comprises 255 residues: 6-phosphogluconolactonase 4 (255 aa).

Belongs to the glucosamine/galactosamine-6-phosphate isomerase family. 6-phosphogluconolactonase subfamily.

The protein localises to the cytoplasm. It carries out the reaction 6-phospho-D-glucono-1,5-lactone + H2O = 6-phospho-D-gluconate + H(+). The protein operates within carbohydrate degradation; pentose phosphate pathway; D-ribulose 5-phosphate from D-glucose 6-phosphate (oxidative stage): step 2/3. Involved in the pentose phosphate pathway via hydrolysis of 6-phosphogluconolactone to 6-phosphogluconate. The sequence is that of 6-phosphogluconolactonase 4 from Saccharomyces cerevisiae (strain ATCC 204508 / S288c) (Baker's yeast).